The following is a 157-amino-acid chain: Eukaryotic translation initiation factor 5A-1 (157 aa).

Serine 2 is subject to N-acetylserine. Phosphoserine is present on serine 2. Phosphothreonine occurs at positions 7 and 10. A Hypusine modification is found at lysine 51. Serine 74 bears the Phosphoserine mark. A Glycyl lysine isopeptide (Lys-Gly) (interchain with G-Cter in ubiquitin) cross-link involves residue lysine 86.

Belongs to the eIF-5A family. Homodimer. Binds to 80S ribosomes. Actively translating ribosomes show mutually exclusive binding of eIF5a (HYP2 or ANB1) and EFT1/eEF2. Interacts with DYS1 and LIA1. Post-translationally, lys-51 undergoes hypusination, a unique post-translational modification that consists in the addition of a butylamino group from spermidine to lysine side chain, leading to the formation of the unusual amino acid hypusine. eIF-5As are the only known proteins to undergo this modification, which is essential for their function.

The protein localises to the cytoplasm. Translation factor that promotes translation elongation and termination, particularly upon ribosome stalling at specific amino acid sequence contexts. Binds between the exit (E) and peptidyl (P) site of the ribosome and promotes rescue of stalled ribosome: specifically required for efficient translation of polyproline-containing peptides as well as other motifs that stall the ribosome. Acts as a ribosome quality control (RQC) cofactor by joining the RQC complex to facilitate peptidyl transfer during CAT tailing step. Involved in actin dynamics and cell cycle progression, mRNA decay and probably in a pathway involved in stress response and maintenance of cell wall integrity. The chain is Eukaryotic translation initiation factor 5A-1 (HYP2) from Saccharomyces cerevisiae (strain ATCC 204508 / S288c) (Baker's yeast).